Reading from the N-terminus, the 309-residue chain is L-aminoadipate-semialdehyde dehydrogenase-phosphopantetheinyl transferase (309 aa).

CoA contacts are provided by residues R47, R86–K91, and N108–H111. Mg(2+) contacts are provided by D129 and E181. E181–K185 serves as a coordination point for CoA.

The protein belongs to the P-Pant transferase superfamily. AcpS family. As to quaternary structure, monomer. Requires Mg(2+) as cofactor.

Its subcellular location is the cytoplasm. It is found in the cytosol. The catalysed reaction is apo-[ACP] + CoA = holo-[ACP] + adenosine 3',5'-bisphosphate + H(+). It catalyses the reaction apo-[ACP] + acetyl-CoA = acetyl-[ACP] + adenosine 3',5'-bisphosphate + H(+). Its function is as follows. Catalyzes the post-translational modification of target proteins by phosphopantetheine. Can transfer the 4'-phosphopantetheine moiety from coenzyme A, regardless of whether the CoA is presented in the free thiol form or as an acetyl thioester, to a serine residue of a broad range of acceptors including the acyl carrier domain of FASN. The chain is L-aminoadipate-semialdehyde dehydrogenase-phosphopantetheinyl transferase (Aasdhppt) from Rattus norvegicus (Rat).